We begin with the raw amino-acid sequence, 314 residues long: Mitochondrial thiamine pyrophosphate carrier 1 (314 aa).

The next 6 helical transmembrane spans lie at 14-30 (VAAWKTLLAGAVSGLLA), 84-100 (LLYVTYGSAQFSSYSLF), 116-136 (LVVGAFAGITSSIVSYPFDVL), 170-186 (GSIASMTTITLTASIMF), 217-233 (SAGTIGGVIAKIITFPL), and 285-302 (GILVALSKTIPTTFVSFW). Solcar repeat units lie at residues 14–103 (VAAW…FNRY), 110–195 (EARL…IRIY), and 210–310 (ELAT…AIHY).

Belongs to the mitochondrial carrier (TC 2.A.29) family.

It is found in the mitochondrion inner membrane. Mitochondrial transporter that mediates uptake of thiamine pyrophosphate (ThPP) into mitochondria. The chain is Mitochondrial thiamine pyrophosphate carrier 1 (TPC1) from Saccharomyces cerevisiae (strain ATCC 204508 / S288c) (Baker's yeast).